Reading from the N-terminus, the 152-residue chain is MAMERTFVAIKPDGVQRGLVGEILGRFERKGFKLVGLKQVTPSRDLAGEHYGVHRERPFFAGLVDFITSGPVIAMVWEGDGVIASARKLIGATKPLDAEPGTIRGDLAVNIGRNVIHGSDGPDTAQFEINLWFSAEELNAWTPSDQSWRIES.

The ATP site is built by Lys11, Phe59, Arg87, Thr93, Arg104, and Asn114. Catalysis depends on His117, which acts as the Pros-phosphohistidine intermediate.

Belongs to the NDK family. As to quaternary structure, homotetramer. Mg(2+) is required as a cofactor.

It is found in the cytoplasm. The catalysed reaction is a 2'-deoxyribonucleoside 5'-diphosphate + ATP = a 2'-deoxyribonucleoside 5'-triphosphate + ADP. The enzyme catalyses a ribonucleoside 5'-diphosphate + ATP = a ribonucleoside 5'-triphosphate + ADP. Major role in the synthesis of nucleoside triphosphates other than ATP. The ATP gamma phosphate is transferred to the NDP beta phosphate via a ping-pong mechanism, using a phosphorylated active-site intermediate. The sequence is that of Nucleoside diphosphate kinase from Prochlorococcus marinus (strain MIT 9313).